Consider the following 416-residue polypeptide: Protein LAZY 1 (416 aa).

A helical membrane pass occupies residues 63–83 (FTFGGSGLLTIGTLGIAAVAI). An IGT motif motif is present at residues 69–75 (GLLTIGT). Disordered stretches follow at residues 266–306 (AAAA…GMPA) and 337–361 (KKSR…DGPL). The segment covering 270-282 (GVGGDRAGKGGGY) has biased composition (gly residues). A Nuclear localization signal motif is present at residues 278–295 (KGGGYKTMKKRKVKDEKG).

It belongs to the LAZY family. Expressed specifically in the cells at the inner side of the vascular bundles of young leaf sheaths and peripheral cylinders of vascular bundles in the unelongated stems. Expressed in the leaf sheath pulvinus and the lamina joint.

The protein resides in the cell membrane. Its subcellular location is the nucleus. Involved in the regulation of shoot gravitropism and tiller angle through negative regulation of basipetal polar auxin transport (PAT). Acts as positive regulator of lateral auxin transport. Promotes vertical shoot growth. LAZY1 and TAC1 play opposite functions in the regulation of tiller growth angle. This Oryza sativa subsp. japonica (Rice) protein is Protein LAZY 1.